The sequence spans 37 residues: Esculentin-2Ra (37 aa).

Cys31 and Cys37 are oxidised to a cystine.

Expressed by the skin glands.

It localises to the secreted. Its function is as follows. Antimicrobial peptide. The chain is Esculentin-2Ra from Pelophylax ridibundus (Marsh frog).